Consider the following 305-residue polypeptide: Superkiller complex protein 8 (305 aa).

WD repeat units follow at residues 14–57, 62–101, 104–143, 146–187, 188–227, 230–269, and 272–305; these read AHED…LELQ, GHQL…QIKS, AGPV…KEHS, TRGK…HTLE, GHAM…LAGT, GHGS…CVNT, and DHQD…DCPM.

Belongs to the SKI8 family. Component of the PAF1 complex. Component of the SKI complex.

The protein localises to the nucleus. The protein resides in the cytoplasm. Component of the PAF1 complex (PAF1C) which has multiple functions during transcription by RNA polymerase II and is implicated in regulation of development and maintenance of embryonic stem cell pluripotency. PAF1C associates with RNA polymerase II through interaction with POLR2A CTD non-phosphorylated and 'Ser-2'- and 'Ser-5'-phosphorylated forms and is involved in transcriptional elongation, acting both independently and synergistically with TCEA1 and in cooperation with the DSIF complex and HTATSF1. Also acts as a component of the SKI complex, a multiprotein complex that assists the RNA-degrading exosome during the mRNA decay and quality-control pathways. The SKI complex catalyzes mRNA extraction from 80S ribosomal complexes in the 3'-5' direction and channels mRNA to the cytosolic exosome for degradation. The polypeptide is Superkiller complex protein 8 (skic8) (Danio rerio (Zebrafish)).